The following is a 68-amino-acid chain: Large ribosomal subunit protein uL29 (68 aa).

It belongs to the universal ribosomal protein uL29 family.

This chain is Large ribosomal subunit protein uL29, found in Bradyrhizobium diazoefficiens (strain JCM 10833 / BCRC 13528 / IAM 13628 / NBRC 14792 / USDA 110).